The following is a 1120-amino-acid chain: Elongation factor-like GTPase 1 (1120 aa).

In terms of domain architecture, tr-type G spans 17-272; it reads ANIRNICVLA…LMKTLWGDYY (256 aa). Residues 26–33, 92–96, and 146–149 each bind GTP; these read AHVDHGKT, DSPGH, and NKID. Residues 430-496 are disordered; it reads PRPLTQEEIA…VESMTPKPVL (67 aa). Composition is skewed to basic and acidic residues over residues 438–452 and 475–484; these read IAQR…HAEK and PKGEEPRGDE. Lys528 bears the N6-acetyllysine mark. The disordered stretch occupies residues 907-930; sequence ASDLAKEGQEENETCSGGNENQEL. Polar residues predominate over residues 920–930; it reads TCSGGNENQEL.

This sequence belongs to the TRAFAC class translation factor GTPase superfamily. Classic translation factor GTPase family. Associates with the 60S ribosomal subunit. Found in a complex consisting of the 60S ribosomal subunit, SBDS and EFL1. Interacts with SBDS and binds to GTP and GDP; the interaction with SBDS decreases EFL1 affinity for GDP and facilitates GDP release. In terms of tissue distribution, expressed at low levels in brain. Expression is highly increased in glioma tissues.

The catalysed reaction is GTP + H2O = GDP + phosphate + H(+). GTPase activity is stimulated in the presence of 60S ribosome subunits. GTPase involved in the biogenesis of the 60S ribosomal subunit and translational activation of ribosomes. Together with SBDS, triggers the GTP-dependent release of EIF6 from 60S pre-ribosomes in the cytoplasm, thereby activating ribosomes for translation competence by allowing 80S ribosome assembly and facilitating EIF6 recycling to the nucleus, where it is required for 60S rRNA processing and nuclear export. The sequence is that of Elongation factor-like GTPase 1 from Homo sapiens (Human).